Consider the following 163-residue polypeptide: Putative defense protein 3 (163 aa).

The signal sequence occupies residues 1-18 (MMFAYIVAVVSALALTSA). One can recognise a Reelin domain in the interval 19 to 163 (YPTGAPSSTC…SAPVTVLSHK (145 aa)). A disulfide bond links C28 and C103.

It belongs to the insect defense protein family.

Its subcellular location is the secreted. May have antimicrobial activity. The chain is Putative defense protein 3 from Antheraea mylitta (Tasar silkworm).